We begin with the raw amino-acid sequence, 335 residues long: Probable cytosolic iron-sulfur protein assembly protein Ciao1 (335 aa).

WD repeat units lie at residues 12–51 (GHKG…WSTK), 57–96 (GHKR…FECN), 101–140 (GHEN…EFEC), 146–185 (PHTQ…SDWD), 192–231 (SHTS…NDAG), 250–289 (QHSR…KRDE), and 301–335 (AHEQ…KMLD).

This sequence belongs to the WD repeat CIA1 family.

Its function is as follows. Essential component of the cytosolic iron-sulfur (Fe/S) protein assembly machinery. Required for the maturation of extramitochondrial Fe/S proteins. This Drosophila willistoni (Fruit fly) protein is Probable cytosolic iron-sulfur protein assembly protein Ciao1.